Reading from the N-terminus, the 466-residue chain is MKPTLVLVGRSNVGKSTLFNRLTRSRDALVADLPGLTRDRHYGHGKLGDRPYLVVDTGGFEPMATEGILHEMAKQTLQAIDEADVVLFIVDGRSGLTAQDKIVAEQLRRSGRRTLLAVNKTEGMAVSVVTAEFHELGLGEPCAISAAHGDNVNELVTLALQDFPDEPEQERKDDHPKIAIVGRPNVGKSTLVNTLLGEERVIAFDQPGTTRDSIYIDFERNGRTYTLIDTAGLRRRGKVQETVEKFSVVKTLQAIEDANVVILVLDAASEISDQDAHIGGFILEAGRALVLAVNKWDSLDEYQRDMIKRDINRKLPFLQNFARFHYISALHGTGTKGLLPSVDAAYGAAMAHLPTPRLTRTLLAAVEKQPPPRAGMSRPKLRYAHQGGSNPPLIIIHGSALNAVPQTYQRYLENTFRDTFGLEGTPLRIEFRTGRNPYAGKSPAPLTEAEAKRAHRRRRYGRKKYG.

2 consecutive EngA-type G domains span residues 3 to 167 and 176 to 350; these read PTLV…PDEP and PKIA…GAAM. Residues 9 to 16, 56 to 60, 119 to 122, 182 to 189, 229 to 233, and 294 to 297 each bind GTP; these read GRSNVGKS, DTGGF, NKTE, GRPNVGKS, DTAGL, and NKWD. One can recognise a KH-like domain in the interval 351–435; sequence AHLPTPRLTR…PLRIEFRTGR (85 aa). The interval 433–466 is disordered; the sequence is TGRNPYAGKSPAPLTEAEAKRAHRRRRYGRKKYG. Residues 453-466 show a composition bias toward basic residues; sequence RAHRRRRYGRKKYG.

This sequence belongs to the TRAFAC class TrmE-Era-EngA-EngB-Septin-like GTPase superfamily. EngA (Der) GTPase family. Associates with the 50S ribosomal subunit.

Its function is as follows. GTPase that plays an essential role in the late steps of ribosome biogenesis. The sequence is that of GTPase Der from Nitrosospira multiformis (strain ATCC 25196 / NCIMB 11849 / C 71).